Consider the following 446-residue polypeptide: Histidine--tRNA ligase (446 aa).

Residues 403–422 (TASVKPLRGTGDDGEKSVQQ) are disordered.

Belongs to the class-II aminoacyl-tRNA synthetase family. As to quaternary structure, homodimer.

It is found in the cytoplasm. The enzyme catalyses tRNA(His) + L-histidine + ATP = L-histidyl-tRNA(His) + AMP + diphosphate + H(+). This Burkholderia thailandensis (strain ATCC 700388 / DSM 13276 / CCUG 48851 / CIP 106301 / E264) protein is Histidine--tRNA ligase.